The sequence spans 492 residues: Pentatricopeptide repeat-containing protein At4g21705, mitochondrial (492 aa).

The transit peptide at 1 to 17 directs the protein to the mitochondrion; sequence MNILRRIPANLIASRYY. 8 PPR repeats span residues 125 to 159, 160 to 194, 195 to 225, 231 to 261, 266 to 296, 301 to 335, 336 to 370, and 371 to 405; these read NDKT…GFVT, SSLT…NVAP, DNYS…MERR, DWNT…SENR, DGEG…EKDV, INQD…GNCY, DFRV…GKAT, and TPES…EVGS.

This sequence belongs to the PPR family. P subfamily.

It is found in the mitochondrion. The chain is Pentatricopeptide repeat-containing protein At4g21705, mitochondrial from Arabidopsis thaliana (Mouse-ear cress).